The primary structure comprises 293 residues: Cep170-like protein (293 aa).

Disordered regions lie at residues 78-110 and 217-270; these read PPLV…LTIT and FPSA…AESE. Over residues 227–245 the composition is skewed to polar residues; that stretch reads KQKSSPVNNHHSPGQTPTL.

Belongs to the CEP170 family.

The protein is Cep170-like protein (CEP170P1) of Homo sapiens (Human).